A 199-amino-acid polypeptide reads, in one-letter code: COMM domain-containing protein 2 (199 aa).

In terms of domain architecture, COMM spans 123–190 (SYHNLEWRLD…QALEEMKTNH (68 aa)).

Belongs to the COMM domain-containing protein 2 family. As to quaternary structure, component of the commander complex consisting of the CCC subcomplex and the retriever subcomplex. Component of the CCC (COMMD/CCDC22/CCDC93) subcomplex consisting of COMMD1, COMMD2, COMMD3, COMMD4, COMMD5, COMMD6, COMMD7, COMMD8, COMMD9, COMMD10, CCDC22 and CCDC93; within the complex forms a heterodimer with COMMD3. Interacts with RELA, RELB, NFKB1/p105, NFKB2/p100. Interacts with CCDC22, CCDC93, SCNN1B, CUL3, CUL4B, CUL5, CUL7. Ubiquitous.

It localises to the cytoplasm. Functionally, scaffold protein in the commander complex that is essential for endosomal recycling of transmembrane cargos; the commander complex is composed of the CCC subcomplex and the retriever subcomplex. May modulate activity of cullin-RING E3 ubiquitin ligase (CRL) complexes. May down-regulate activation of NF-kappa-B. The protein is COMM domain-containing protein 2 (COMMD2) of Homo sapiens (Human).